Reading from the N-terminus, the 245-residue chain is 1-(5-phosphoribosyl)-5-[(5-phosphoribosylamino)methylideneamino] imidazole-4-carboxamide isomerase (245 aa).

Residue D7 is the Proton acceptor of the active site. The active-site Proton donor is D129.

The protein belongs to the HisA/HisF family.

The protein resides in the cytoplasm. The enzyme catalyses 1-(5-phospho-beta-D-ribosyl)-5-[(5-phospho-beta-D-ribosylamino)methylideneamino]imidazole-4-carboxamide = 5-[(5-phospho-1-deoxy-D-ribulos-1-ylimino)methylamino]-1-(5-phospho-beta-D-ribosyl)imidazole-4-carboxamide. The protein operates within amino-acid biosynthesis; L-histidine biosynthesis; L-histidine from 5-phospho-alpha-D-ribose 1-diphosphate: step 4/9. The chain is 1-(5-phosphoribosyl)-5-[(5-phosphoribosylamino)methylideneamino] imidazole-4-carboxamide isomerase from Buchnera aphidicola subsp. Cinara cedri (strain Cc).